The primary structure comprises 51 residues: Perinerin (51 aa).

In terms of biological role, antibacterial activity against both Gram-negative and Gram-positive bacteria. Shows marked activity against P.aeruginosa, B.megaterium, A.viridans, moderate activity against E.coli K-12, S.aureus and M.luteus, and minor activity against P.vulgaris. Antifungal activity against P.heliothis. The protein is Perinerin of Perinereis aibuhitensis (Korean lugworm).